The primary structure comprises 236 residues: Phosphoribosylaminoimidazole-succinocarboxamide synthase (236 aa).

The protein belongs to the SAICAR synthetase family.

It carries out the reaction 5-amino-1-(5-phospho-D-ribosyl)imidazole-4-carboxylate + L-aspartate + ATP = (2S)-2-[5-amino-1-(5-phospho-beta-D-ribosyl)imidazole-4-carboxamido]succinate + ADP + phosphate + 2 H(+). Its pathway is purine metabolism; IMP biosynthesis via de novo pathway; 5-amino-1-(5-phospho-D-ribosyl)imidazole-4-carboxamide from 5-amino-1-(5-phospho-D-ribosyl)imidazole-4-carboxylate: step 1/2. The polypeptide is Phosphoribosylaminoimidazole-succinocarboxamide synthase (Campylobacter curvus (strain 525.92)).